Consider the following 205-residue polypeptide: High frequency lysogenization protein HflD homolog (205 aa).

Belongs to the HflD family.

It localises to the cytoplasm. The protein resides in the cell inner membrane. The chain is High frequency lysogenization protein HflD homolog from Alkalilimnicola ehrlichii (strain ATCC BAA-1101 / DSM 17681 / MLHE-1).